We begin with the raw amino-acid sequence, 295 residues long: ATP synthase gamma chain (295 aa).

This sequence belongs to the ATPase gamma chain family. In terms of assembly, F-type ATPases have 2 components, CF(1) - the catalytic core - and CF(0) - the membrane proton channel. CF(1) has five subunits: alpha(3), beta(3), gamma(1), delta(1), epsilon(1). CF(0) has three main subunits: a, b and c.

It localises to the cell inner membrane. Produces ATP from ADP in the presence of a proton gradient across the membrane. The gamma chain is believed to be important in regulating ATPase activity and the flow of protons through the CF(0) complex. This Campylobacter curvus (strain 525.92) protein is ATP synthase gamma chain.